Reading from the N-terminus, the 357-residue chain is Glycerol-3-phosphate dehydrogenase [NAD(P)+] (357 aa).

Residues Ser12, Trp13, His33, and Lys115 each contribute to the NADPH site. Residues Lys115, Gly149, and Ser151 each coordinate sn-glycerol 3-phosphate. Gly153 lines the NADPH pocket. Positions 204, 263, 274, and 275 each coordinate sn-glycerol 3-phosphate. The active-site Proton acceptor is the Lys204. Arg274 is a binding site for NADPH. NADPH-binding residues include Leu307 and Glu309.

Belongs to the NAD-dependent glycerol-3-phosphate dehydrogenase family.

Its subcellular location is the cytoplasm. The catalysed reaction is sn-glycerol 3-phosphate + NAD(+) = dihydroxyacetone phosphate + NADH + H(+). It catalyses the reaction sn-glycerol 3-phosphate + NADP(+) = dihydroxyacetone phosphate + NADPH + H(+). Its pathway is membrane lipid metabolism; glycerophospholipid metabolism. Catalyzes the reduction of the glycolytic intermediate dihydroxyacetone phosphate (DHAP) to sn-glycerol 3-phosphate (G3P), the key precursor for phospholipid synthesis. The polypeptide is Glycerol-3-phosphate dehydrogenase [NAD(P)+] (Treponema denticola (strain ATCC 35405 / DSM 14222 / CIP 103919 / JCM 8153 / KCTC 15104)).